A 207-amino-acid chain; its full sequence is MWALDKIKGTTTVGIVCKDGVVLTADRRASLGNMVISKGVTKIFQVDDHLALAGAGAVGDILSLVRALRAESKLYRAKVGKEMSTKALATLTSNILSGRKYLPYFGWFLIGGYDEKPSLYSIDMAGGITEDKYVSAGSGMEFAYSILDNEYSEKITLNNGVKLAIKAINAAIKRDVFTGDGIMVVTIDREGYRELSKEEVEKLLKKL.

Residues 1–9 (MWALDKIKG) constitute a propeptide, removed in mature form; by autocatalysis. T10 acts as the Nucleophile in catalysis.

The protein belongs to the peptidase T1B family. In terms of assembly, the 20S proteasome core is composed of 14 alpha and 14 beta subunits that assemble into four stacked heptameric rings, resulting in a barrel-shaped structure. The two inner rings, each composed of seven catalytic beta subunits, are sandwiched by two outer rings, each composed of seven alpha subunits. The catalytic chamber with the active sites is on the inside of the barrel. Has a gated structure, the ends of the cylinder being occluded by the N-termini of the alpha-subunits. Is capped at one or both ends by the proteasome regulatory ATPase, PAN.

Its subcellular location is the cytoplasm. The enzyme catalyses Cleavage of peptide bonds with very broad specificity.. The formation of the proteasomal ATPase PAN-20S proteasome complex, via the docking of the C-termini of PAN into the intersubunit pockets in the alpha-rings, triggers opening of the gate for substrate entry. Interconversion between the open-gate and close-gate conformations leads to a dynamic regulation of the 20S proteasome proteolysis activity. Functionally, component of the proteasome core, a large protease complex with broad specificity involved in protein degradation. The sequence is that of Proteasome subunit beta 1 from Thermococcus sibiricus (strain DSM 12597 / MM 739).